A 426-amino-acid polypeptide reads, in one-letter code: Gamma-glutamylputrescine oxidoreductase (426 aa).

This sequence belongs to the gamma-glutamylputrescine oxidoreductase family.

The catalysed reaction is gamma-L-glutamylputrescine + O2 + H2O = 4-(gamma-L-glutamylamino)butanal + H2O2 + NH4(+). Its pathway is amine and polyamine degradation; putrescine degradation; 4-aminobutanoate from putrescine: step 2/4. Involved in the breakdown of putrescine via the oxidation of L-glutamylputrescine. The polypeptide is Gamma-glutamylputrescine oxidoreductase (puuB) (Escherichia coli (strain K12)).